The primary structure comprises 303 residues: Protease HtpX homolog (303 aa).

The next 2 membrane-spanning stretches (helical) occupy residues 19–39 (IIIF…VSYF) and 41–61 (LGEF…YYAY). Zn(2+) is bound at residue His146. The active site involves Glu147. His150 lines the Zn(2+) pocket. 2 helical membrane-spanning segments follow: residues 156–176 (VRLQ…GDSL) and 192–212 (NILG…ATLL). Residue Glu221 coordinates Zn(2+).

The protein belongs to the peptidase M48B family. It depends on Zn(2+) as a cofactor.

The protein resides in the cell inner membrane. The sequence is that of Protease HtpX homolog from Dictyoglomus thermophilum (strain ATCC 35947 / DSM 3960 / H-6-12).